A 454-amino-acid chain; its full sequence is Histidine--tRNA ligase (454 aa).

A disordered region spans residues 434–454 (ADAGAWNPPTEDLHPGVIGTW).

Belongs to the class-II aminoacyl-tRNA synthetase family. As to quaternary structure, homodimer.

It is found in the cytoplasm. The catalysed reaction is tRNA(His) + L-histidine + ATP = L-histidyl-tRNA(His) + AMP + diphosphate + H(+). The protein is Histidine--tRNA ligase (hisS) of Cutibacterium acnes (strain DSM 16379 / KPA171202) (Propionibacterium acnes).